The primary structure comprises 148 residues: Putative nickel-responsive regulator (148 aa).

4 residues coordinate Ni(2+): His88, His99, His101, and Cys107.

This sequence belongs to the transcriptional regulatory CopG/NikR family. Ni(2+) is required as a cofactor.

Transcriptional regulator. The polypeptide is Putative nickel-responsive regulator (Helicobacter acinonychis (strain Sheeba)).